We begin with the raw amino-acid sequence, 1400 residues long: DNA-directed RNA polymerase subunit beta' (1400 aa).

Zn(2+)-binding residues include cysteine 70, cysteine 72, cysteine 85, and cysteine 88. The Mg(2+) site is built by aspartate 460, aspartate 462, and aspartate 464. Residues cysteine 814, cysteine 888, cysteine 895, and cysteine 898 each coordinate Zn(2+).

Belongs to the RNA polymerase beta' chain family. As to quaternary structure, the RNAP catalytic core consists of 2 alpha, 1 beta, 1 beta' and 1 omega subunit. When a sigma factor is associated with the core the holoenzyme is formed, which can initiate transcription. The cofactor is Mg(2+). Zn(2+) is required as a cofactor.

The catalysed reaction is RNA(n) + a ribonucleoside 5'-triphosphate = RNA(n+1) + diphosphate. Its function is as follows. DNA-dependent RNA polymerase catalyzes the transcription of DNA into RNA using the four ribonucleoside triphosphates as substrates. This is DNA-directed RNA polymerase subunit beta' from Vibrio vulnificus (strain CMCP6).